Here is a 382-residue protein sequence, read N- to C-terminus: Lipid-A-disaccharide synthase (382 aa).

Belongs to the LpxB family.

It catalyses the reaction 2-N,3-O-bis[(3R)-3-hydroxytetradecanoyl]-alpha-D-glucosaminyl 1-phosphate + UDP-2-N,3-O-bis[(3R)-3-hydroxytetradecanoyl]-alpha-D-glucosamine = lipid A disaccharide (E. coli) + UDP + H(+). The catalysed reaction is a lipid X + a UDP-2-N,3-O-bis[(3R)-3-hydroxyacyl]-alpha-D-glucosamine = a lipid A disaccharide + UDP + H(+). The protein operates within glycolipid biosynthesis; lipid IV(A) biosynthesis; lipid IV(A) from (3R)-3-hydroxytetradecanoyl-[acyl-carrier-protein] and UDP-N-acetyl-alpha-D-glucosamine: step 5/6. Its function is as follows. Condensation of UDP-2,3-diacylglucosamine and 2,3-diacylglucosamine-1-phosphate to form lipid A disaccharide, a precursor of lipid A, a phosphorylated glycolipid that anchors the lipopolysaccharide to the outer membrane of the cell. The sequence is that of Lipid-A-disaccharide synthase from Escherichia coli (strain SMS-3-5 / SECEC).